Consider the following 571-residue polypeptide: Urease subunit alpha (571 aa).

The 439-residue stretch at 133–571 folds into the Urease domain; that stretch reads GGIDTHIHFI…LPLAQRYFLF (439 aa). Residues His-138, His-140, and Lys-221 each coordinate Ni(2+). N6-carboxylysine is present on Lys-221. His-223 contacts substrate. Ni(2+) contacts are provided by His-250 and His-276. His-324 functions as the Proton donor in the catalytic mechanism. Asp-364 lines the Ni(2+) pocket.

This sequence belongs to the metallo-dependent hydrolases superfamily. Urease alpha subunit family. As to quaternary structure, heterotrimer of UreA (gamma), UreB (beta) and UreC (alpha) subunits. Three heterotrimers associate to form the active enzyme. The cofactor is Ni cation. Carboxylation allows a single lysine to coordinate two nickel ions.

The protein resides in the cytoplasm. The enzyme catalyses urea + 2 H2O + H(+) = hydrogencarbonate + 2 NH4(+). It functions in the pathway nitrogen metabolism; urea degradation; CO(2) and NH(3) from urea (urease route): step 1/1. This Corynebacterium efficiens (strain DSM 44549 / YS-314 / AJ 12310 / JCM 11189 / NBRC 100395) protein is Urease subunit alpha.